The sequence spans 282 residues: Ribonuclease P protein subunit p38 (282 aa).

2 disordered regions span residues 1 to 21 (MAAA…PLPV) and 61 to 103 (EDRK…QASG). A2 carries the post-translational modification N-acetylalanine. The residue at position 12 (S12) is a Phosphoserine. The segment covering 88 to 97 (EDLKKEKPKG) has biased composition (basic and acidic residues). A phosphoserine mark is found at S226 and S235. A disordered region spans residues 262 to 282 (KLIPNPNKIRKPPKSKRTASK). The segment covering 269–282 (KIRKPPKSKRTASK) has biased composition (basic residues).

Belongs to the eukaryotic ribosomal protein eL8 family. In terms of assembly, component of nuclear RNase P and RNase MRP ribonucleoproteins. RNase P consists of a catalytic RNA moiety and about 10 protein subunits; POP1, POP4, POP5, POP7, RPP14, RPP21, RPP25, RPP30, RPP38 and RPP40. Within the RNase P complex, POP1, POP7 and RPP25 form the 'finger' subcomplex, POP5, RPP14, RPP40 and homodimeric RPP30 form the 'palm' subcomplex, and RPP21, POP4 and RPP38 form the 'wrist' subcomplex. All subunits of the RNase P complex interact with the catalytic RNA. Several subunits of RNase P are also part of the RNase MRP complex. RNase MRP consists of a catalytic RNA moiety and about 8 protein subunits; POP1, POP7, RPP25, RPP30, RPP38, RPP40 and possibly also POP4 and POP5.

The protein localises to the nucleus. Its subcellular location is the nucleolus. Its function is as follows. Component of ribonuclease P, a ribonucleoprotein complex that generates mature tRNA molecules by cleaving their 5'-ends. Also a component of the MRP ribonuclease complex, which cleaves pre-rRNA sequences. In Bos taurus (Bovine), this protein is Ribonuclease P protein subunit p38 (RPP38).